A 35-amino-acid chain; its full sequence is Cycloamanide F proprotein (35 aa).

Residues 1-10 (MSDINATRLP) constitute a propeptide that is removed on maturation. Positions 11–18 (IVGILGLP) form a cross-link, cyclopeptide (Ile-Pro). Positions 19 to 35 (CIGDDVNSTLTHGEDLC) are excised as a propeptide.

Belongs to the MSDIN fungal toxin family. Processed by the macrocyclase-peptidase enzyme POPB to yield a cyclic decapeptide. POPB first removes 10 residues from the N-terminus. Conformational trapping of the remaining peptide forces the enzyme to release this intermediate rather than proceed to macrocyclization. The enzyme rebinds the remaining peptide in a different conformation and catalyzes macrocyclization of the N-terminal 8 residues.

Cyclic octapeptide that belongs to the MSDIN-like toxin family responsible for a large number of food poisoning cases and deaths. Cycloaminide E is structurally related to other cycloamanides that are non-toxic to mammals but show immunosuppressive activity. This Amanita phalloides (Death cap) protein is Cycloamanide F proprotein.